The sequence spans 193 residues: Molybdopterin synthase catalytic subunit (193 aa).

Substrate is bound by residues 118–119 (HR), K134, and 141–143 (KKE). Positions 159–193 (DRTTTDGTTASSPAPATRPAKGGGCCGRKVRVNES) are disordered. Low complexity predominate over residues 163–178 (TDGTTASSPAPATRPA).

It belongs to the MoaE family. MOCS2B subfamily. Heterotetramer; composed of 2 small (MOCS2A) and 2 large (MOCS2B) subunits.

The protein localises to the cytoplasm. It carries out the reaction 2 [molybdopterin-synthase sulfur-carrier protein]-C-terminal-Gly-aminoethanethioate + cyclic pyranopterin phosphate + H2O = molybdopterin + 2 [molybdopterin-synthase sulfur-carrier protein]-C-terminal Gly-Gly + 2 H(+). It participates in cofactor biosynthesis; molybdopterin biosynthesis. Catalytic subunit of the molybdopterin synthase complex, a complex that catalyzes the conversion of precursor Z into molybdopterin. Acts by mediating the incorporation of 2 sulfur atoms from thiocarboxylated MOCS2A into precursor Z to generate a dithiolene group. The chain is Molybdopterin synthase catalytic subunit from Oryza sativa subsp. japonica (Rice).